We begin with the raw amino-acid sequence, 206 residues long: Ras-related protein Ral-A (206 aa).

GTP is bound by residues 24-29 (GVGKSA), 40-46 (VEDYEPT), and 127-130 (NKSD). The Effector region signature appears at 43–51 (YEPTKADSY). Threonine 46 is a glycosylation site ((Microbial infection) O-linked (Glc) threonine; by P.sordellii toxin TcsL). Serine 194 is subject to Phosphoserine; by AURKA. Cysteine methyl ester is present on cysteine 203. Cysteine 203 carries the S-geranylgeranyl cysteine lipid modification. The propeptide at 204-206 (CIL) is removed in mature form.

It belongs to the small GTPase superfamily. Ras family. In terms of assembly, interacts (via effector domain) with RALBP1; during mitosis, recruits RALBP1 to the mitochondrion where it promotes DNM1L phosphorylation and mitochondrial fission. Interacts with EXOC2/Sec5 and EXOC8/Exo84; binding to EXOC2 and EXOC8 is mutually exclusive. Interacts with Clostridium exoenzyme C3. Interacts with RALGPS1. Interacts with LPAR1 and LPAR2. Interacts with GRK2 in response to LPAR1 activation. RALA and GRK2 binding to LPAR1 is mutually exclusive. Interacts with CDC42. Post-translationally, phosphorylated. Phosphorylation at Ser-194 by AURKA/Aurora kinase A, during mitosis, induces RALA localization to the mitochondrion where it regulates mitochondrial fission. Prenylation is essential for membrane localization. The geranylgeranylated form and the farnesylated mutant do not undergo alternative prenylation in response to geranylgeranyltransferase I inhibitors (GGTIs) and farnesyltransferase I inhibitors (FTIs). In terms of processing, (Microbial infection) Glucosylated at Thr-46 by P.sordellii toxin TcsL from strain 6018. Monoglucosylation completely prevents the recognition of the downstream effector, blocking the GTPases in their inactive form. Not glucosylated by TcsL from strain VPI 9048.

It localises to the cell membrane. The protein localises to the cleavage furrow. It is found in the midbody. Its subcellular location is the midbody ring. The protein resides in the mitochondrion. The enzyme catalyses GTP + H2O = GDP + phosphate + H(+). Its activity is regulated as follows. Alternates between an inactive form bound to GDP and an active form bound to GTP. Activated by a guanine nucleotide-exchange factor (GEF) and inactivated by a GTPase-activating protein (GAP). In terms of biological role, multifunctional GTPase involved in a variety of cellular processes including gene expression, cell migration, cell proliferation, oncogenic transformation and membrane trafficking. Accomplishes its multiple functions by interacting with distinct downstream effectors. Acts as a GTP sensor for GTP-dependent exocytosis of dense core vesicles. The RALA-exocyst complex regulates integrin-dependent membrane raft exocytosis and growth signaling. Key regulator of LPAR1 signaling and competes with GRK2 for binding to LPAR1 thus affecting the signaling properties of the receptor. Required for anchorage-independent proliferation of transformed cells. During mitosis, supports the stabilization and elongation of the intracellular bridge between dividing cells. Cooperates with EXOC2 to recruit other components of the exocyst to the early midbody. During mitosis, also controls mitochondrial fission by recruiting to the mitochondrion RALBP1, which mediates the phosphorylation and activation of DNM1L by the mitotic kinase cyclin B-CDK1. This Homo sapiens (Human) protein is Ras-related protein Ral-A (RALA).